Here is a 367-residue protein sequence, read N- to C-terminus: Mitochondrial distribution and morphology protein 34 (367 aa).

The SMP-LTD domain occupies 1–197; it reads MSFNFTWPEF…LPSIIHRLSQ (197 aa). Disordered stretches follow at residues 267 to 311 and 347 to 367; these read QGLK…ALSS and PAHR…FHLS. Residues 286 to 302 are compositionally biased toward polar residues; the sequence is FHTTSRVRVPSSLESNA.

The protein belongs to the MDM34 family. As to quaternary structure, component of the ER-mitochondria encounter structure (ERMES) or MDM complex, composed of MMM1, MDM10, MDM12 and MDM34.

Its subcellular location is the mitochondrion outer membrane. Component of the ERMES/MDM complex, which serves as a molecular tether to connect the endoplasmic reticulum (ER) and mitochondria. Components of this complex are involved in the control of mitochondrial shape and protein biogenesis, and function in nonvesicular lipid trafficking between the ER and mitochondria. MDM34 is required for the interaction of the ER-resident membrane protein MMM1 and the outer mitochondrial membrane-resident beta-barrel protein MDM10. The protein is Mitochondrial distribution and morphology protein 34 of Malassezia globosa (strain ATCC MYA-4612 / CBS 7966) (Dandruff-associated fungus).